Here is a 188-residue protein sequence, read N- to C-terminus: ATP-dependent Clp protease proteolytic subunit 1 (188 aa).

Catalysis depends on serine 90, which acts as the Nucleophile. Residue histidine 115 is part of the active site.

Belongs to the peptidase S14 family. In terms of assembly, fourteen ClpP subunits assemble into 2 heptameric rings which stack back to back to give a disk-like structure with a central cavity, resembling the structure of eukaryotic proteasomes.

The protein localises to the cytoplasm. The enzyme catalyses Hydrolysis of proteins to small peptides in the presence of ATP and magnesium. alpha-casein is the usual test substrate. In the absence of ATP, only oligopeptides shorter than five residues are hydrolyzed (such as succinyl-Leu-Tyr-|-NHMec, and Leu-Tyr-Leu-|-Tyr-Trp, in which cleavage of the -Tyr-|-Leu- and -Tyr-|-Trp bonds also occurs).. In terms of biological role, cleaves peptides in various proteins in a process that requires ATP hydrolysis. Has a chymotrypsin-like activity. Plays a major role in the degradation of misfolded proteins. The sequence is that of ATP-dependent Clp protease proteolytic subunit 1 from Corynebacterium jeikeium (strain K411).